Here is a 640-residue protein sequence, read N- to C-terminus: Replication protein A 70 kDa DNA-binding subunit A (640 aa).

The OB DNA-binding region spans 211-293 (AIKARVTAKG…NHLKNEWEIF (83 aa)). A C4-type zinc finger spans residues 503 to 529 (CPLMIGDKQCNKKVTRSGTNRWLCDRC).

It belongs to the replication factor A protein 1 family. Heterotrimer of RPA1, RPA2 and RPA3 (canonical replication protein A complex). Interacts with RPA2A. In terms of tissue distribution, expressed in roots, leaves, stalks and flower buds.

Its subcellular location is the nucleus. Component of the replication protein A complex (RPA) required for DNA recombination, repair and replication. The activity of RPA is mediated by single-stranded DNA binding and protein interactions. Plays an essential role at later stages of meiotic recombination events required for the formation of class I crossovers. Is essential for normal progression through meiosis in pollen mother cells. Is involved in repair of double-strand DNA breaks (DSBs) induced by genotoxic stresses, but does not seem to be required for the repair of meiotic DSBs. The chain is Replication protein A 70 kDa DNA-binding subunit A (RPA1A) from Arabidopsis thaliana (Mouse-ear cress).